We begin with the raw amino-acid sequence, 917 residues long: Smoothelin (917 aa).

A2 carries the N-acetylalanine modification. Residues 24–89 (LAERRRIRSA…ARLAGQLESM (66 aa)) are a coiled coil. The segment at 157 to 456 (EVPEREEQEQ…AVGTAEPGGS (300 aa)) is disordered. Residues 177–188 (PEGTSQDVTTVT) show a composition bias toward polar residues. Composition is skewed to low complexity over residues 193-210 (APPGSTSSSPASPSSSPT) and 220-232 (PAEAQCLTAEVPG). Residues 233–243 (SPEPPPSPPKT) are compositionally biased toward pro residues. Over residues 244-258 (TSPEPQESPTLPSTE) the composition is skewed to low complexity. Residues 298–326 (RSLSVLSPRQPAQNRESTPLASGPSSFQR) show a composition bias toward polar residues. Phosphoserine occurs at positions 299, 301, and 304. Basic and acidic residues predominate over residues 329-338 (SVRDRVHKFT). S341 carries the post-translational modification Phosphoserine. T351 is subject to Phosphothreonine. Residue S357 is modified to Phosphoserine. Phosphothreonine is present on residues T360 and T373. Positions 363–392 (RLLGPSLTSTTPASSSSGSSSRGPSDTSSR) are enriched in low complexity. Residues S503, S514, S523, and S576 each carry the phosphoserine modification. Disordered regions lie at residues 560 to 580 (ANGAEQTRVNKAPEGRSPLSA) and 617 to 767 (QRKR…RKAM). The stretch at 603 to 630 (EERKLIRAALRELRQRKRDQRDKERERR) forms a coiled coil. Positions 617–640 (QRKRDQRDKERERRLQEARGRPGE) are enriched in basic and acidic residues. Residues 676–689 (NDGTRTARTTTVES) are compositionally biased toward polar residues. Residues 701 to 720 (STMMQTKTFSSSSSSKKMGS) are compositionally biased toward low complexity. Position 729 is a phosphoserine (S729). Over residues 738–750 (LEKRQAEKKKELM) the composition is skewed to basic and acidic residues. Residue S792 is modified to Phosphoserine. Residues 799–906 (NSIKQMLLDW…YVQSLYNHLR (108 aa)) enclose the Calponin-homology (CH) domain.

It belongs to the smoothelin family. In terms of tissue distribution, smooth muscle; contractile or vascular (for the long form).

Its subcellular location is the cytoplasm. The protein localises to the cytoskeleton. Structural protein of the cytoskeleton. The polypeptide is Smoothelin (SMTN) (Homo sapiens (Human)).